Here is a 209-residue protein sequence, read N- to C-terminus: NADH-quinone oxidoreductase subunit C (209 aa).

The protein belongs to the complex I 30 kDa subunit family. NDH-1 is composed of 14 different subunits. Subunits NuoB, C, D, E, F, and G constitute the peripheral sector of the complex.

Its subcellular location is the cell inner membrane. The catalysed reaction is a quinone + NADH + 5 H(+)(in) = a quinol + NAD(+) + 4 H(+)(out). NDH-1 shuttles electrons from NADH, via FMN and iron-sulfur (Fe-S) centers, to quinones in the respiratory chain. The immediate electron acceptor for the enzyme in this species is believed to be ubiquinone. Couples the redox reaction to proton translocation (for every two electrons transferred, four hydrogen ions are translocated across the cytoplasmic membrane), and thus conserves the redox energy in a proton gradient. In Phenylobacterium zucineum (strain HLK1), this protein is NADH-quinone oxidoreductase subunit C.